The following is a 576-amino-acid chain: Probable metalloreductase AIM14 (576 aa).

Transmembrane regions (helical) follow at residues 21-41 (IKYGYYVLIISLVYLIGLALL), 70-90 (AIHLGILFFAVLVPFYYHYSL), 101-118 (LGRLSYALIPLNLFLTLR), 142-162 (IITVIGLLHGIFFIIKWAIDD), 177-197 (FVGFIISILVLFLLICSIGPM), 204-224 (LFYIVHNLVNVAFILLTPIHS), and 230-250 (FPFLLLNCTLLFIHIINRIVF). The region spanning 101-219 (LGRLSYALIP…NLVNVAFILL (119 aa)) is the Ferric oxidoreductase domain. In terms of domain architecture, FAD-binding FR-type spans 250-388 (FAKSLMILNK…GGSGISFALP (139 aa)). Over residues 480-505 (ISNFNSENADSNDNTPETSHSPTKEN) the composition is skewed to polar residues. The tract at residues 480–507 (ISNFNSENADSNDNTPETSHSPTKENGS) is disordered.

Belongs to the ferric reductase (FRE) family. AIM14 subfamily. As to quaternary structure, interacts with ribosomes.

It is found in the membrane. Functionally, probable cell surface metalloreductase. May be involved in iron or copper homeostasis. This Saccharomyces cerevisiae (strain Lalvin EC1118 / Prise de mousse) (Baker's yeast) protein is Probable metalloreductase AIM14 (AIM14).